The chain runs to 386 residues: Succinyl-diaminopimelate desuccinylase (386 aa).

His77 serves as a coordination point for Zn(2+). Asp79 is a catalytic residue. Position 110 (Asp110) interacts with Zn(2+). The active-site Proton acceptor is the Glu144. 3 residues coordinate Zn(2+): Glu145, Glu173, and His359.

This sequence belongs to the peptidase M20A family. DapE subfamily. As to quaternary structure, homodimer. Zn(2+) is required as a cofactor. The cofactor is Co(2+).

It catalyses the reaction N-succinyl-(2S,6S)-2,6-diaminopimelate + H2O = (2S,6S)-2,6-diaminopimelate + succinate. It functions in the pathway amino-acid biosynthesis; L-lysine biosynthesis via DAP pathway; LL-2,6-diaminopimelate from (S)-tetrahydrodipicolinate (succinylase route): step 3/3. Functionally, catalyzes the hydrolysis of N-succinyl-L,L-diaminopimelic acid (SDAP), forming succinate and LL-2,6-diaminopimelate (DAP), an intermediate involved in the bacterial biosynthesis of lysine and meso-diaminopimelic acid, an essential component of bacterial cell walls. The protein is Succinyl-diaminopimelate desuccinylase of Methylibium petroleiphilum (strain ATCC BAA-1232 / LMG 22953 / PM1).